A 361-amino-acid polypeptide reads, in one-letter code: Phosphoserine aminotransferase (361 aa).

Arg-42 lines the L-glutamate pocket. Pyridoxal 5'-phosphate-binding positions include 76-77 (AR), Trp-102, Thr-153, Asp-173, and Gln-196. Position 197 is an N6-(pyridoxal phosphate)lysine (Lys-197). 238-239 (NT) provides a ligand contact to pyridoxal 5'-phosphate.

The protein belongs to the class-V pyridoxal-phosphate-dependent aminotransferase family. SerC subfamily. Homodimer. Pyridoxal 5'-phosphate serves as cofactor.

The protein localises to the cytoplasm. It catalyses the reaction O-phospho-L-serine + 2-oxoglutarate = 3-phosphooxypyruvate + L-glutamate. The catalysed reaction is 4-(phosphooxy)-L-threonine + 2-oxoglutarate = (R)-3-hydroxy-2-oxo-4-phosphooxybutanoate + L-glutamate. It participates in amino-acid biosynthesis; L-serine biosynthesis; L-serine from 3-phospho-D-glycerate: step 2/3. Its pathway is cofactor biosynthesis; pyridoxine 5'-phosphate biosynthesis; pyridoxine 5'-phosphate from D-erythrose 4-phosphate: step 3/5. Its function is as follows. Catalyzes the reversible conversion of 3-phosphohydroxypyruvate to phosphoserine and of 3-hydroxy-2-oxo-4-phosphonooxybutanoate to phosphohydroxythreonine. The sequence is that of Phosphoserine aminotransferase from Buchnera aphidicola subsp. Schizaphis graminum (strain Sg).